Here is a 149-residue protein sequence, read N- to C-terminus: Nucleoside diphosphate kinase (149 aa).

ATP contacts are provided by lysine 9, phenylalanine 57, arginine 85, threonine 91, arginine 102, and asparagine 112. Histidine 115 functions as the Pros-phosphohistidine intermediate in the catalytic mechanism.

It belongs to the NDK family. As to quaternary structure, homotetramer. It depends on Mg(2+) as a cofactor.

The protein resides in the cytoplasm. The catalysed reaction is a 2'-deoxyribonucleoside 5'-diphosphate + ATP = a 2'-deoxyribonucleoside 5'-triphosphate + ADP. The enzyme catalyses a ribonucleoside 5'-diphosphate + ATP = a ribonucleoside 5'-triphosphate + ADP. Major role in the synthesis of nucleoside triphosphates other than ATP. The ATP gamma phosphate is transferred to the NDP beta phosphate via a ping-pong mechanism, using a phosphorylated active-site intermediate. The chain is Nucleoside diphosphate kinase from Acaryochloris marina (strain MBIC 11017).